Here is a 182-residue protein sequence, read N- to C-terminus: MDAIVYFAKGFMYLFEVGGNTFVSWVTGIIPKVLLLLVFMNSIIAFIGQDKVDRFAKFASRNVILAYGVLPFLSAFMLGNPMALSMGKFLPERMKPSYYASASYHCHTNSGIFPHINVGEIFIYLGIANGITTLGLDPTALGLRYLLVGLVMNFFAGWVTDFTTKIVMRQQGIELSNQLKAN.

The PTS EIIC type-5 domain maps to 1–182 (MDAIVYFAKG…IELSNQLKAN (182 aa)). 3 consecutive transmembrane segments (helical) span residues 28-48 (GIIP…AFIG), 63-83 (VILA…NPMA), and 139-159 (TALG…AGWV).

It is found in the cell membrane. The phosphoenolpyruvate-dependent sugar phosphotransferase system (PTS), a major carbohydrate active transport system, catalyzes the phosphorylation of incoming sugar substrates concomitant with their translocation across the cell membrane. The enzyme II complex composed of SrlA, SrlB and SrlE is involved in glucitol/sorbitol transport. This Clostridium beijerinckii (strain ATCC 51743 / NCIMB 8052) (Clostridium acetobutylicum) protein is PTS system glucitol/sorbitol-specific EIIC component (srlA).